The sequence spans 654 residues: Interferon-induced GTP-binding protein Mx1 (654 aa).

N-acetylmethionine is present on Met1. Composition is skewed to basic and acidic residues over residues 1–12 (MVLSDLDIKEPD) and 23–32 (DMVREHETES). The disordered stretch occupies residues 1 to 33 (MVLSDLDIKEPDSPESGLNGSDDMVREHETESK). Residues 62–335 (DLALPAIAVI…LIMHICKTLP (274 aa)) enclose the Dynamin-type G domain. Positions 72–79 (GDQSSGKS) are G1 motif. 72-79 (GDQSSGKS) is a binding site for GTP. The interval 97-99 (VTR) is G2 motif. A G3 motif region spans residues 173–176 (DLPG). GTP-binding positions include 173 to 177 (DLPGI) and 242 to 245 (TKPD). The segment at 242–245 (TKPD) is G4 motif. A G5 motif region spans residues 274–277 (KCRG). Residues 336 to 361 (LLENQIKETHQRITEELQKYGKDIPE) form a bundle signaling element (BSE) region. A middle domain region spans residues 361–528 (EEESEKMFSL…HFQMEQLVYC (168 aa)). The tract at residues 362–624 (EESEKMFSLI…KDQYDWLLKE (263 aa)) is stalk. The interval 544-563 (EAEEEKKKKSNHYYQSEDSE) is disordered. The critical for lipid-binding stretch occupies residues 549–552 (KKKK). The GED domain maps to 566 to 654 (TAEIFQHLMA…ARQRLAKFPG (89 aa)).

Belongs to the TRAFAC class dynamin-like GTPase superfamily. Dynamin/Fzo/YdjA family. As to quaternary structure, homooligomer. Oligomerizes into multimeric filamentous or ring-like structures by virtue of its stalk domain. Oligomerization is critical for GTPase activity, protein stability, and recognition of viral target structures. Interacts with TRPC1, TRPC3, TRPC4, TRPC5, TRPC6 and TRPC7. Interacts with HSPA5. Interacts with DDX39A and DDX39B. Interacts with TUBB/TUBB5. ISGylated.

The protein resides in the cytoplasm. The protein localises to the endoplasmic reticulum membrane. Its subcellular location is the perinuclear region. Functionally, interferon-induced dynamin-like GTPase with antiviral activity. This Ovis aries (Sheep) protein is Interferon-induced GTP-binding protein Mx1 (MX1).